The sequence spans 672 residues: Putative sodium/calcium exchanger 7 (672 aa).

An N-terminal signal peptide occupies residues 1–23 (MAQPSILFSLTLIFLISIKSCDA). A run of 12 helical transmembrane segments spans residues 88–108 (VILI…VSSA), 130–150 (VAGV…GSIA), 164–184 (LGEL…TIIL), 196–216 (IRDL…FVFY), 221–241 (LWMP…VIGA), 451–471 (LTLL…QFFL), 479–499 (PGLW…IMVF), 522–542 (IAWI…LGVV), 551–571 (GLTI…VSVV), 581–601 (AAAI…PFTI), 620–640 (LILF…VQKF), and 649–669 (VLIS…TGVL).

The protein belongs to the Ca(2+):cation antiporter (CaCA) (TC 2.A.19) family.

The protein localises to the membrane. The protein is Putative sodium/calcium exchanger 7 (ncx-7) of Caenorhabditis elegans.